A 390-amino-acid chain; its full sequence is Anhydro-N-acetylmuramic acid kinase (390 aa).

9-16 (GTSLDGID) contributes to the ATP binding site.

This sequence belongs to the anhydro-N-acetylmuramic acid kinase family.

The enzyme catalyses 1,6-anhydro-N-acetyl-beta-muramate + ATP + H2O = N-acetyl-D-muramate 6-phosphate + ADP + H(+). It functions in the pathway amino-sugar metabolism; 1,6-anhydro-N-acetylmuramate degradation. It participates in cell wall biogenesis; peptidoglycan recycling. Catalyzes the specific phosphorylation of 1,6-anhydro-N-acetylmuramic acid (anhMurNAc) with the simultaneous cleavage of the 1,6-anhydro ring, generating MurNAc-6-P. Is required for the utilization of anhMurNAc either imported from the medium or derived from its own cell wall murein, and thus plays a role in cell wall recycling. In Bacillus cereus (strain ATCC 14579 / DSM 31 / CCUG 7414 / JCM 2152 / NBRC 15305 / NCIMB 9373 / NCTC 2599 / NRRL B-3711), this protein is Anhydro-N-acetylmuramic acid kinase.